The sequence spans 298 residues: Iron-regulated virulence regulatory protein IrgB (298 aa).

The region spanning 1–59 (MQDLSAVKAFHALCQHKSLTAAAKALEQPKSTLSRRLAQLEEDLGQSLLMRQGNRLTLT) is the HTH lysR-type domain. Residues 19–38 (LTAAAKALEQPKSTLSRRLA) constitute a DNA-binding region (H-T-H motif).

Belongs to the LysR transcriptional regulatory family.

In terms of biological role, transcription activation of the irgA gene. In the presence of sufficient iron, transcription of both irgA and irgB is negatively regulated by a fur-like protein. In low iron conditions, negative regulation of transcription is removed, and production of irgB leads to positive transcriptional activation of irgA. This chain is Iron-regulated virulence regulatory protein IrgB (irgB), found in Vibrio cholerae serotype O1 (strain ATCC 39315 / El Tor Inaba N16961).